A 176-amino-acid polypeptide reads, in one-letter code: ATP synthase subunit delta (176 aa).

Belongs to the ATPase delta chain family. As to quaternary structure, F-type ATPases have 2 components, F(1) - the catalytic core - and F(0) - the membrane proton channel. F(1) has five subunits: alpha(3), beta(3), gamma(1), delta(1), epsilon(1). F(0) has three main subunits: a(1), b(2) and c(10-14). The alpha and beta chains form an alternating ring which encloses part of the gamma chain. F(1) is attached to F(0) by a central stalk formed by the gamma and epsilon chains, while a peripheral stalk is formed by the delta and b chains.

It is found in the cell inner membrane. Its function is as follows. F(1)F(0) ATP synthase produces ATP from ADP in the presence of a proton or sodium gradient. F-type ATPases consist of two structural domains, F(1) containing the extramembraneous catalytic core and F(0) containing the membrane proton channel, linked together by a central stalk and a peripheral stalk. During catalysis, ATP synthesis in the catalytic domain of F(1) is coupled via a rotary mechanism of the central stalk subunits to proton translocation. This protein is part of the stalk that links CF(0) to CF(1). It either transmits conformational changes from CF(0) to CF(1) or is implicated in proton conduction. This Polaromonas sp. (strain JS666 / ATCC BAA-500) protein is ATP synthase subunit delta.